A 745-amino-acid chain; its full sequence is Cytoplasmic polyadenylation element-binding protein 3 (745 aa).

Disordered stretches follow at residues 1–45 (MNLN…KSPT), 94–180 (VGSK…TNNS), and 204–283 (NKAN…FGEL). The segment covering 162–175 (LNFERDAEQKKDST) has biased composition (basic and acidic residues). Polar residues predominate over residues 219–229 (ETPTDSPQKGF). A compositionally biased stretch (low complexity) spans 230–240 (SSSTESSPSDS). The segment covering 241–255 (MNQFPSREHFTSANE) has biased composition (polar residues). A compositionally biased stretch (basic and acidic residues) spans 264–276 (FQQEHGNKNRDSD). The 23-residue stretch at 297–319 (IFVGGVPWDITEAALKDSFGEFG) folds into the RRM domain.

Cytoplasmic polyadenylation element binding protein that binds to and regulates the translation of specific mRNAs. May not be required for oogenesis. This chain is Cytoplasmic polyadenylation element-binding protein 3 (cpb-3), found in Caenorhabditis elegans.